The following is a 92-amino-acid chain: Small ribosomal subunit protein bS20 (92 aa).

The tract at residues 1–23 is disordered; the sequence is MANSPSAKKRAKQAEKRRSHNAS. Residues 7-20 are compositionally biased toward basic residues; sequence AKKRAKQAEKRRSH.

Belongs to the bacterial ribosomal protein bS20 family.

Binds directly to 16S ribosomal RNA. This Pseudomonas fluorescens (strain ATCC BAA-477 / NRRL B-23932 / Pf-5) protein is Small ribosomal subunit protein bS20.